A 579-amino-acid polypeptide reads, in one-letter code: A-type ATP synthase subunit A (579 aa).

229-236 (GPFGSGKT) is a binding site for ATP.

This sequence belongs to the ATPase alpha/beta chains family. In terms of assembly, has multiple subunits with at least A(3), B(3), C, D, E, F, H, I and proteolipid K(x).

Its subcellular location is the cell membrane. The enzyme catalyses ATP + H2O + 4 H(+)(in) = ADP + phosphate + 5 H(+)(out). Functionally, component of the A-type ATP synthase that produces ATP from ADP in the presence of a proton gradient across the membrane. The A chain is the catalytic subunit. The sequence is that of A-type ATP synthase subunit A from Methanocella arvoryzae (strain DSM 22066 / NBRC 105507 / MRE50).